The following is a 416-amino-acid chain: MPGKSTRPLPAPRPCCAPCPFWSPRLAGMQGTGSTRSTGSESWRSWAWTSRPSLLVTGRLHFPQLALRRRLGQLSCMSKPALKLRSWPLTVLYYLLPLGALRPLSRVGWRPVSRVALYKSVPTRLLSRAWGRLNQVELPHWLRRPVYSLYIWTFGVNMKEAAVEDLHHYRNLSEFFRRKLKPQARPVCGLHSVISPSDGKILNFGQVKNCEVEQVKGVTYSLESFLGPRTPSEDLPFPPATPHSSFRSQLVTREGNELYHCVIYLAPGDYHCFHSPTDWTVSHRRHFPGSLMSVNPGMARWIKELFCHNERVVLTGDWKHGFFSLTAVGATNVGSIRIYFDRDLHTNSPRYSKGSYNDFSFVTHANKEGIPMRKGEHLGEFNLGSTIVLIFEAPKDFNFRLQAGQKIRFGEALGSL.

Over 1–67 the chain is Mitochondrial matrix; sequence MPGKSTRPLP…GRLHFPQLAL (67 aa). The helical transmembrane segment at 68-86 threads the bilayer; that stretch reads RRRLGQLSCMSKPALKLRS. At 87–416 the chain is on the mitochondrial intermembrane side; it reads WPLTVLYYLL…IRFGEALGSL (330 aa). Catalysis depends on charge relay system; for autoendoproteolytic cleavage activity residues Asp198, His274, and Ser385. The Schiff-base intermediate with substrate; via pyruvic acid; for decarboxylase activity role is filled by Ser385. Position 385 is a pyruvic acid (Ser); by autocatalysis (Ser385).

The protein belongs to the phosphatidylserine decarboxylase family. PSD-B subfamily. Eukaryotic type I sub-subfamily. As to quaternary structure, heterodimer of a large membrane-associated beta subunit and a small pyruvoyl-containing alpha subunit. Requires pyruvate as cofactor. In terms of processing, is synthesized initially as an inactive proenzyme. Formation of the active enzyme involves a self-maturation process in which the active site pyruvoyl group is generated from an internal serine residue via an autocatalytic post-translational modification. Two non-identical subunits are generated from the proenzyme in this reaction, and the pyruvate is formed at the N-terminus of the alpha chain, which is derived from the carboxyl end of the proenzyme. The autoendoproteolytic cleavage occurs by a canonical serine protease mechanism, in which the side chain hydroxyl group of the serine supplies its oxygen atom to form the C-terminus of the beta chain, while the remainder of the serine residue undergoes an oxidative deamination to produce ammonia and the pyruvoyl prosthetic group on the alpha chain. During this reaction, the Ser that is part of the protease active site of the proenzyme becomes the pyruvoyl prosthetic group, which constitutes an essential element of the active site of the mature decarboxylase.

It is found in the mitochondrion inner membrane. It localises to the cytoplasm. The protein resides in the lipid droplet. The enzyme catalyses a 1,2-diacyl-sn-glycero-3-phospho-L-serine + H(+) = a 1,2-diacyl-sn-glycero-3-phosphoethanolamine + CO2. It functions in the pathway phospholipid metabolism; phosphatidylethanolamine biosynthesis. In terms of biological role, catalyzes the formation of phosphatidylethanolamine (PtdEtn) from phosphatidylserine (PtdSer). Plays a central role in phospholipid metabolism and in the interorganelle trafficking of phosphatidylserine. May be involved in lipid droplet biogenesis at the endoplasmic reticulum membrane. The polypeptide is Phosphatidylserine decarboxylase proenzyme, mitochondrial (Bos taurus (Bovine)).